Here is a 582-residue protein sequence, read N- to C-terminus: Semenogelin-2 (582 aa).

The N-terminal stretch at 1–23 (MKSIILFVLSLLLILEKQAAVMG) is a signal peptide. A disordered region spans residues 24–59 (QKGGSKGQLPSGSSQFPHGQKGQHYFGQKDQQHTKS). Positions 31–40 (QLPSGSSQFP) are enriched in polar residues. A run of 3 repeats spans residues 70-129 (HVDI…IVIH), 141-200 (NPSQ…QTEE), and 201-260 (LVVN…QDEL). Residues 70-559 (HVDINDHDWT…SSESHNIVIT (490 aa)) are repeat-rich region. Disordered stretches follow at residues 132 to 160 (GGQA…SQCS), 173 to 194 (KEQA…QSSY), 228 to 248 (EEHS…RLQH), and 269 to 582 (QTKN…PIST). Composition is skewed to polar residues over residues 137 to 160 (HGTQ…SQCS) and 174 to 194 (EQAS…QSSY). Positions 261 to 500 (LVYNKNQHQT…QSSISFQIEK (240 aa)) are 4 X 60 AA tandem repeats, type I. Asn272 is a glycosylation site (N-linked (GlcNAc...) asparagine). Residues 292-310 (RTEERQLHHGEKSVQKDVS) are compositionally biased toward basic and acidic residues. Residues 325-334 (KSQNQVTIHS) show a composition bias toward polar residues. Residues 335-345 (QDQEHGHKENK) show a composition bias toward basic and acidic residues. A compositionally biased stretch (polar residues) spans 372–397 (GSISIQTEEQIHGKSQNQVRIPSQAQ). The span at 413-426 (TEERRLNSGEKDVQ) shows a compositional bias: basic and acidic residues. Residues 445–455 (KSQNQVTIPSQ) show a composition bias toward polar residues. Basic and acidic residues predominate over residues 456–465 (DQEHGHKENK). Polar residues-rich tracts occupy residues 482-496 (GKST…SISF) and 506-532 (SQIQ…QSAD). The stretch at 501–559 (LVEGKSQIQTPNPNQDQWSGQNAKGKSGQSADSKQDLLSHEQKGRYKQESSESHNIVIT) is one 3-2 repeat. Composition is skewed to basic and acidic residues over residues 533-552 (SKQD…ESSE) and 559-582 (TEHE…PIST).

This sequence belongs to the semenogelin family. Interacts with SERPINA5. Semenogelin-2 is thought to form both the 71 kDa polypeptide and, in its glycosylated form, the 76 kDa polypeptide. As to expression, seminal vesicles, and to a much lesser extent, epididymis.

The protein localises to the secreted. Participates in the formation of a gel matrix (sperm coagulum) entrapping the accessory gland secretions and ejaculated spermatozoa. This is Semenogelin-2 (SEMG2) from Homo sapiens (Human).